Reading from the N-terminus, the 46-residue chain is METSSPALSVAIGVLAVLFGLTGFGVYQAFGPPSKALDDPFDDHED.

A helical transmembrane segment spans residues 7-27 (ALSVAIGVLAVLFGLTGFGVY).

The protein belongs to the PsbN family.

Its subcellular location is the cellular thylakoid membrane. In terms of biological role, may play a role in photosystem I and II biogenesis. This Synechococcus sp. (strain CC9605) protein is Protein PsbN.